We begin with the raw amino-acid sequence, 171 residues long: Zinc uptake regulation protein (171 aa).

Belongs to the Fur family.

Acts as a negative controlling element, employing Zn(2+) as a cofactor to bind the operator of the repressed genes (znuACB). This chain is Zinc uptake regulation protein (zur), found in Escherichia coli (strain K12).